The following is a 101-amino-acid chain: MSRRCELTAKGAQVGHKVSHSNIKTKRRFLPNLVNVTFLSDALGRPVRLRVSTNALKSVDHRGGLDGFLLKAKDAELSPKAVDIKRQIQKKKLTAELAALA.

It belongs to the bacterial ribosomal protein bL28 family.

The protein is Large ribosomal subunit protein bL28 of Rhodopseudomonas palustris (strain BisB18).